The following is a 615-amino-acid chain: Elongation factor 4 (615 aa).

The tr-type G domain maps to 17–198 (ASIRNFCIIA…RVSRTIPAPV (182 aa)). GTP contacts are provided by residues 29–34 (DHGKST) and 145–148 (NKID).

It belongs to the TRAFAC class translation factor GTPase superfamily. Classic translation factor GTPase family. LepA subfamily.

The protein resides in the cell membrane. The catalysed reaction is GTP + H2O = GDP + phosphate + H(+). Functionally, required for accurate and efficient protein synthesis under certain stress conditions. May act as a fidelity factor of the translation reaction, by catalyzing a one-codon backward translocation of tRNAs on improperly translocated ribosomes. Back-translocation proceeds from a post-translocation (POST) complex to a pre-translocation (PRE) complex, thus giving elongation factor G a second chance to translocate the tRNAs correctly. Binds to ribosomes in a GTP-dependent manner. The polypeptide is Elongation factor 4 (Clavibacter sepedonicus (Clavibacter michiganensis subsp. sepedonicus)).